A 69-amino-acid chain; its full sequence is Snake venom metalloproteinase BnP2 (69 aa).

The Peptidase M12B domain maps to 1 to 69; it reads YIELAVVADH…EWRERDIIPR (69 aa). Glu-3 is a Ca(2+) binding site.

It belongs to the venom metalloproteinase (M12B) family. P-I subfamily. In terms of assembly, monomer. Requires Zn(2+) as cofactor. Expressed by the venom gland.

It localises to the secreted. Inhibited by EDTA. This protein is a zinc protease from snake venom that is devoid of significant myotoxic and hemorrhagic activities. It hydrolyzes the Aalpha-chain and more slowly the Bbeta-chain of fibrin and fibrinogen, without affecting the gamma-chains. It induces cell detachment and a apoptosis (anoikis) in endothelial cells. This is Snake venom metalloproteinase BnP2 from Bothrops pauloensis (Neuwied's lancehead).